A 391-amino-acid polypeptide reads, in one-letter code: 3-ketoacyl-CoA thiolase (391 aa).

The Acyl-thioester intermediate role is filled by cysteine 95. Active-site proton acceptor residues include histidine 347 and cysteine 377.

This sequence belongs to the thiolase-like superfamily. Thiolase family. In terms of assembly, heterotetramer of two alpha chains (FadB) and two beta chains (FadA).

Its subcellular location is the cytoplasm. It carries out the reaction an acyl-CoA + acetyl-CoA = a 3-oxoacyl-CoA + CoA. The protein operates within lipid metabolism; fatty acid beta-oxidation. Functionally, catalyzes the final step of fatty acid oxidation in which acetyl-CoA is released and the CoA ester of a fatty acid two carbons shorter is formed. The chain is 3-ketoacyl-CoA thiolase from Pseudomonas entomophila (strain L48).